A 167-amino-acid polypeptide reads, in one-letter code: Protein-export protein SecB (167 aa).

This sequence belongs to the SecB family. As to quaternary structure, homotetramer, a dimer of dimers. One homotetramer interacts with 1 SecA dimer.

The protein resides in the cytoplasm. In terms of biological role, one of the proteins required for the normal export of preproteins out of the cell cytoplasm. It is a molecular chaperone that binds to a subset of precursor proteins, maintaining them in a translocation-competent state. It also specifically binds to its receptor SecA. In Wolbachia pipientis wMel, this protein is Protein-export protein SecB.